The following is a 727-amino-acid chain: ABC transporter G family member STR2 (727 aa).

Topologically, residues 1–475 (MKTQGLELET…NFTNIRRTPE (475 aa)) are cytoplasmic. The 251-residue stretch at 25 to 275 (LEFESLTYTV…LNRMGRKIPK (251 aa)) folds into the ABC transporter domain. 69–76 (GPSGAGKS) contacts ATP. Residues 476 to 496 (LFLSRLMVLTFMGVMMATMFH) form a helical membrane-spanning segment. At 497–510 (NPKNTLQGITNRLS) the chain is on the extracellular side. A helical transmembrane segment spans residues 511–531 (FFIFTVCLFFFSSNDAVPAFI). The Cytoplasmic portion of the chain corresponds to 532 to 559 (QERFIFIRETSHNAYRASCYTIASLITH). The helical transmembrane segment at 560–580 (MPFLALQALAYAAIVWFALEL) threads the bilayer. Over 581–583 (RGP) the chain is Extracellular. A helical transmembrane segment spans residues 584–604 (FIYFFLVLFISLLSTNSFVVF). Over 605 to 612 (VSSIVPNY) the chain is Cytoplasmic. A helical membrane pass occupies residues 613-633 (ILGYAAVIAFTALFFLFCGYF). The Extracellular portion of the chain corresponds to 634-699 (LSSEDIPLYW…GTEEIKKRNN (66 aa)). N667 is a glycosylation site (N-linked (GlcNAc...) asparagine). A helical membrane pass occupies residues 700-720 (VLIMLGWAVLYRILFYIILRF). The Cytoplasmic segment spans residues 721 to 727 (ASKNQRS).

Belongs to the ABC transporter superfamily. ABCG family. Stunted arbuscule (STR) subfamily. In terms of assembly, heterodimerizes with STR; the resulting transporter is located in the peri-arbuscular membrane. In terms of tissue distribution, expressed constitutively in the vascular tissue of roots.

The protein localises to the cell membrane. Its function is as follows. Together with STR, required for arbuscule development in arbuscular mycorrhizal symbiosis. This is ABC transporter G family member STR2 from Medicago truncatula (Barrel medic).